The primary structure comprises 1379 residues: MAQTQTFNGRRRVRKFFGKIPEVAEMPNLIEVQKASYDQFLMVEEPQGGRPDEGLQAVFKSVFPISDFAGTAMLEFVKYEFEAPKFDTEECRQRDLTYAAPLKVTLRLIVFDIDEDTGSKSIKDIKEQDVYMGDMPLMTDNGTFIINGTERVIVSQMHRSPGVFFDHDKGKSHSSGKLLFAARVIPYRGSWLDIEFDAKDIVYARIDRRRKIPVTSLLMALGMDGEEILSTFYNKLTFIRDGDNWRVPFSAERFRGMKATADIIDADTGEVVLEAGKKMTARMARQLADKGLKAIRATEDDLLGNYLAEDIVNMKTGEIFLEAGDEIDEKTLKILLETAGNEVKFLDIDHVNIGGYIRNTLVADKNESRQDALFDIYRVMRPGEPPTLETAEAMFHSLFFDAERYDLSAVGRVKMNMRLELDCPDTVRVLRSEDMVAVVRTLVELRDGKGEIDDIDNLGNRRVRSVGELMENQYRLGLLRMERAIKERMSSIEIDTVMPQDLINAKPAAAAVREFFGSSQLSQFMDQTNPLSEITHKRRLSALGPGGLTRERAGFEVRDVHPTHYGRICPIETPEGPNIGLINSLATFARVNKYGFIETPYRKIVDGKVTEEVVYLSAMEEAKHYVAQANATIDENGGFADEFVVCRHAGEVIMAPRENVDLMDVSPKQLVSVAAALIPFLENDDANRALMGSNMQRQAVPLVRAEAPFVGTGMEPVVARDSGAAIAARRTGVVDQVDATRIVIRATEDVDASQSGVDIYRLQKFQRSNQNTCINQRPLVRVGDLINKGDIIADGPSTDLGDLALGRNVLVAFMPWNGYNYEDSILLSERIVRDDIFTSIHIEEFEVMARDTKLGPEEITRDIPNVSEEALKNLDEAGIVYIGAEVQPGDILVGKITPKGESPMTPEEKLLRAIFGEKASDVRDTSMRMPPGTYGTVVEVRVFNRHGVEKDERAMAIEREEIERLAKDRDDEQSILDRNVYARLSEMLIGKEAIAGPKGFKKGGALTKELLGEYPRSQWWQFAVEDEKLQSELEALRAQYDESKNALQQRFMDKVEKVQRGDEMPPGVMKMVKVFVAVKRKMQPGDKMAGRHGNKGVVSRIVPIEDMPFLEDGTHVDIVLNPLGVPSRMNVGQILETHLGWACAGMGRQIGELIDAYKEAGDIKPLRAKIESLIPDNDRNEPVRQYDDESVVRLSEQLRRGVSIATPVFDGAHESDINEMLEEAGLNSSGQVTLYDGRTGEEFDRKVTVGYIYMLKLHHLVDDKIHARSIGPYSLVTQQPLGGKAQFGGQRFGEMEVWALEAYGAAYTLQEMLTVKSDDVAGRTKVYEAIVRGDDTFEAGIPESFNVLVKEMRSLGLNVELENSSRFDTPPAQLPEAAE.

Belongs to the RNA polymerase beta chain family. In terms of assembly, the RNAP catalytic core consists of 2 alpha, 1 beta, 1 beta' and 1 omega subunit. When a sigma factor is associated with the core the holoenzyme is formed, which can initiate transcription.

It carries out the reaction RNA(n) + a ribonucleoside 5'-triphosphate = RNA(n+1) + diphosphate. In terms of biological role, DNA-dependent RNA polymerase catalyzes the transcription of DNA into RNA using the four ribonucleoside triphosphates as substrates. This chain is DNA-directed RNA polymerase subunit beta, found in Chelativorans sp. (strain BNC1).